The following is a 167-amino-acid chain: S-ribosylhomocysteine lyase (167 aa).

Residues H54, H58, and C128 each contribute to the Fe cation site.

Belongs to the LuxS family. In terms of assembly, homodimer. Fe cation is required as a cofactor.

It carries out the reaction S-(5-deoxy-D-ribos-5-yl)-L-homocysteine = (S)-4,5-dihydroxypentane-2,3-dione + L-homocysteine. Involved in the synthesis of autoinducer 2 (AI-2) which is secreted by bacteria and is used to communicate both the cell density and the metabolic potential of the environment. The regulation of gene expression in response to changes in cell density is called quorum sensing. Catalyzes the transformation of S-ribosylhomocysteine (RHC) to homocysteine (HC) and 4,5-dihydroxy-2,3-pentadione (DPD). The polypeptide is S-ribosylhomocysteine lyase (Haemophilus influenzae (strain PittEE)).